The primary structure comprises 35 residues: Cecropin-B (35 aa).

At Leu-35 the chain carries Leucine amide.

This sequence belongs to the cecropin family.

It localises to the secreted. Cecropins have lytic and antibacterial activity against several Gram-positive and Gram-negative bacteria. This is Cecropin-B from Antheraea pernyi (Chinese oak silk moth).